The following is a 916-amino-acid chain: Translation initiation factor IF-2 (916 aa).

A disordered region spans residues 55–324 (EPKAVTPTSK…NHNANLKPVT (270 aa)). The span at 77-88 (AAEPKAAATKPA) shows a compositional bias: low complexity. 3 stretches are compositionally biased toward basic and acidic residues: residues 98-121 (FKAEREARAKAEAERRQNNGERRN), 129-161 (RQKDNRNHGSQDRRNDNRNNRNRQNDNRRDNRN), and 198-212 (RQSETRFHEAQEAKR). A compositionally biased stretch (low complexity) spans 227 to 250 (KEQPTVEAAATAAPQAQPQTVEQV). A compositionally biased stretch (basic and acidic residues) spans 264–281 (ARPDKSRDFSHENEDGPK). Residues 291-304 (KQNQVRNQKNSNWN) show a composition bias toward low complexity. A compositionally biased stretch (basic residues) spans 305-314 (KKNKKSKNNR). In terms of domain architecture, tr-type G spans 418–585 (ERAPVVTIMG…TVLLVAEIQE (168 aa)). The interval 427–434 (GHVDHGKT) is G1. 427 to 434 (GHVDHGKT) is a binding site for GTP. The G2 stretch occupies residues 452–456 (GITQH). The interval 473 to 476 (DTPG) is G3. Residues 473–477 (DTPGH) and 527–530 (NKID) each bind GTP. The G4 stretch occupies residues 527–530 (NKID). A G5 region spans residues 563 to 565 (SAK).

Belongs to the TRAFAC class translation factor GTPase superfamily. Classic translation factor GTPase family. IF-2 subfamily.

The protein localises to the cytoplasm. One of the essential components for the initiation of protein synthesis. Protects formylmethionyl-tRNA from spontaneous hydrolysis and promotes its binding to the 30S ribosomal subunits. Also involved in the hydrolysis of GTP during the formation of the 70S ribosomal complex. This is Translation initiation factor IF-2 from Streptococcus mutans serotype c (strain ATCC 700610 / UA159).